The chain runs to 658 residues: Heat shock 70 kDa protein, mitochondrial (658 aa).

The interval 629 to 658 is disordered; sequence KLDSSASKSSSTENKENKDNTTEAEFTEKK. Residues 631 to 640 show a composition bias toward low complexity; sequence DSSASKSSST. Basic and acidic residues predominate over residues 641–658; the sequence is ENKENKDNTTEAEFTEKK.

This sequence belongs to the heat shock protein 70 family.

The protein resides in the mitochondrion. May function in protein folding and assembly, and disassembly of protein complexes. In Dictyostelium discoideum (Social amoeba), this protein is Heat shock 70 kDa protein, mitochondrial (mhsp70).